Reading from the N-terminus, the 403-residue chain is tRNA(Met) cytidine acetate ligase (403 aa).

ATP is bound by residues 7–20 (IVEYNPFHNGHLYH), Gly-102, Asn-168, and Arg-193.

The protein belongs to the TmcAL family.

It localises to the cytoplasm. The enzyme catalyses cytidine(34) in elongator tRNA(Met) + acetate + ATP = N(4)-acetylcytidine(34) in elongator tRNA(Met) + AMP + diphosphate. Its function is as follows. Catalyzes the formation of N(4)-acetylcytidine (ac(4)C) at the wobble position of elongator tRNA(Met), using acetate and ATP as substrates. First activates an acetate ion to form acetyladenylate (Ac-AMP) and then transfers the acetyl group to tRNA to form ac(4)C34. This is tRNA(Met) cytidine acetate ligase from Clostridium tetani (strain Massachusetts / E88).